Reading from the N-terminus, the 139-residue chain is Probable transcription termination protein NusA (139 aa).

Positions 97–139 (STVAYAEVDRADTGVAIGRDGETIETARRLAERQFDIDDIELA) constitute a KH domain.

The protein belongs to the NusA family.

Its subcellular location is the cytoplasm. In terms of biological role, participates in transcription termination. The polypeptide is Probable transcription termination protein NusA (Halococcus morrhuae (Micrococcus morrhuae)).